We begin with the raw amino-acid sequence, 189 residues long: Peptidyl-tRNA hydrolase (189 aa).

Y15 provides a ligand contact to tRNA. H20 functions as the Proton acceptor in the catalytic mechanism. 2 residues coordinate tRNA: F64 and N66.

Belongs to the PTH family. Monomer.

The protein localises to the cytoplasm. The catalysed reaction is an N-acyl-L-alpha-aminoacyl-tRNA + H2O = an N-acyl-L-amino acid + a tRNA + H(+). Its function is as follows. Hydrolyzes ribosome-free peptidyl-tRNAs (with 1 or more amino acids incorporated), which drop off the ribosome during protein synthesis, or as a result of ribosome stalling. In terms of biological role, catalyzes the release of premature peptidyl moieties from peptidyl-tRNA molecules trapped in stalled 50S ribosomal subunits, and thus maintains levels of free tRNAs and 50S ribosomes. The chain is Peptidyl-tRNA hydrolase from Persephonella marina (strain DSM 14350 / EX-H1).